The sequence spans 593 residues: ATPase family AAA domain-containing protein 3-A (593 aa).

The interval 1–64 (MSWLFGLNKG…AKAARELDQS (64 aa)) is disordered. Over 1-242 (MSWLFGLNKG…FRTFISDWDK (242 aa)) the chain is Mitochondrial intermembrane. Over residues 15 to 27 (PGVPGFPEPPSPP) the composition is skewed to pro residues. Composition is skewed to basic and acidic residues over residues 33-44 (GGDKNKPKDKWS) and 53-64 (RAAKAARELDQS). Residues 52–215 (ERAAKAAREL…QIRLKAAEHR (164 aa)) are a coiled coil. Residues 243–260 (VTATVAGLTLLAVGVYTA) form a helical membrane-spanning segment. Residues 261 to 593 (KNATGVAGRY…LQPLLEGTQV (333 aa)) lie on the Mitochondrial matrix side of the membrane. 348–355 (GPPGTGKT) contributes to the ATP binding site.

The protein belongs to the AAA ATPase family. As to quaternary structure, can form homooligomers. Homodimer formation at the N-terminus may be regulated by ATP and is required for the interaction with the inner surface of the mitochondrial outer membrane and correct mitochondrial homeostasis.

The protein localises to the mitochondrion inner membrane. It localises to the mitochondrion matrix. Its subcellular location is the mitochondrion nucleoid. The catalysed reaction is ATP + H2O = ADP + phosphate + H(+). Functionally, essential for mitochondrial network organization, mitochondrial metabolism and cell growth at organism and cellular level. May play an important role in mitochondrial protein synthesis. May also participate in mitochondrial DNA replication. May bind to mitochondrial DNA D-loops and contribute to nucleoid stability. Required for enhanced channeling of cholesterol for hormone-dependent steroidogenesis. Involved in mitochondrial-mediated antiviral innate immunity. Required to protect mitochondria from the PERK-mediated unfolded protein response: specifically inhibits the activity of EIF2AK3/PERK at mitochondria-endoplasmic reticulum contact sites, thereby providing a safe haven for mitochondrial protein translation during endoplasmic reticulum stress. Ability to inhibit EIF2AK3/PERK is independent of its ATPase activity. Also involved in the mitochondrial DNA damage response by promoting signaling between damaged genomes and the mitochondrial membrane, leading to activation of the integrated stress response (ISR). The protein is ATPase family AAA domain-containing protein 3-A (atad3-a) of Xenopus laevis (African clawed frog).